The sequence spans 71 residues: MIPRLLPFFASLLFAALLFPGDIPPGIRNTVCLMQQGHCRLFMCRSGERKGDICSDPWNRCCVPYSVKDRR.

The signal sequence occupies residues 1-19 (MIPRLLPFFASLLFAALLF). Cystine bridges form between cysteine 32–cysteine 61, cysteine 39–cysteine 54, and cysteine 44–cysteine 62.

Belongs to the beta-defensin family.

The protein resides in the secreted. In terms of biological role, has antimicrobial activity against E.coli. Plays a role in the defense response in the male reproductive tract, contributing to sperm maturation, storage and protection. The protein is Sperm-associated antigen 11A of Mus musculus (Mouse).